We begin with the raw amino-acid sequence, 238 residues long: 1-(5-phosphoribosyl)-5-[(5-phosphoribosylamino)methylideneamino] imidazole-4-carboxamide isomerase (238 aa).

The active-site Proton acceptor is D8. The active-site Proton donor is the D130.

This sequence belongs to the HisA/HisF family.

The protein localises to the cytoplasm. It carries out the reaction 1-(5-phospho-beta-D-ribosyl)-5-[(5-phospho-beta-D-ribosylamino)methylideneamino]imidazole-4-carboxamide = 5-[(5-phospho-1-deoxy-D-ribulos-1-ylimino)methylamino]-1-(5-phospho-beta-D-ribosyl)imidazole-4-carboxamide. The protein operates within amino-acid biosynthesis; L-histidine biosynthesis; L-histidine from 5-phospho-alpha-D-ribose 1-diphosphate: step 4/9. The protein is 1-(5-phosphoribosyl)-5-[(5-phosphoribosylamino)methylideneamino] imidazole-4-carboxamide isomerase of Methanococcus maripaludis (strain C6 / ATCC BAA-1332).